The following is a 236-amino-acid chain: Purine nucleoside phosphorylase (236 aa).

Residue His-5 participates in a purine D-ribonucleoside binding. Residues Gly-21, Arg-25, Arg-43, and 86–89 contribute to the phosphate site; that span reads RYGT. Residues Glu-163, 180–182, and 204–205 each bind a purine D-ribonucleoside; these read EME and SD.

Belongs to the PNP/UDP phosphorylase family. In terms of assembly, homohexamer; disulfide-linked. Trimer of homodimers, with three symmetric intersubunit disulfide bonds linking the dimers to one another.

It catalyses the reaction S-methyl-5'-thioadenosine + phosphate = 5-(methylsulfanyl)-alpha-D-ribose 1-phosphate + adenine. It carries out the reaction a purine D-ribonucleoside + phosphate = a purine nucleobase + alpha-D-ribose 1-phosphate. The enzyme catalyses a purine 2'-deoxy-D-ribonucleoside + phosphate = a purine nucleobase + 2-deoxy-alpha-D-ribose 1-phosphate. Its pathway is purine metabolism; purine nucleoside salvage. In terms of biological role, cleavage of guanosine or inosine to respective bases and sugar-1-phosphate molecules. Cleaves inosine, guanosine, and adenosine with a better efficiency than MTA. The sequence is that of Purine nucleoside phosphorylase from Saccharolobus solfataricus (strain ATCC 35092 / DSM 1617 / JCM 11322 / P2) (Sulfolobus solfataricus).